A 300-amino-acid polypeptide reads, in one-letter code: AAATGSGTTLKGATVPLNISYEGGKYVLRDLSKPTGTQIITYDLQNRQSRLPGTLVSSTTKTFTSSSQRAAVDAHYNLGKVYDYFYSNFKRNSYDNKGSKIVSSVHYGTQYNNAAWTGDQMIYGDGDGSFFSPLSGSLDVTAHEMTHGVTQETANLIYENQPGALNESFSDVFGYFNDTEDWDIGEDITVSQPALRSLSNPTKYNQPDNYANYRNLPNTDEGDYGGVHTNSGIPNKAAYNTITKLGVSKSQQIYYRALTTYLTPSSTFKDAKAALIQSARDLYGSTDAAKVEAAWNAVGL.

Aspartate 139 contributes to the Ca(2+) binding site. Residue histidine 143 participates in Zn(2+) binding. Glutamate 144 is a catalytic residue. Residues histidine 147 and glutamate 167 each coordinate Zn(2+). Residues aspartate 178, aspartate 181, aspartate 183, and glutamate 186 each coordinate Ca(2+). Histidine 228 functions as the Proton donor in the catalytic mechanism.

Belongs to the peptidase M4 family. The cofactor is Ca(2+). It depends on Zn(2+) as a cofactor.

The protein resides in the secreted. The enzyme catalyses Similar, but not identical, to that of thermolysin.. Its function is as follows. Extracellular zinc metalloprotease. This chain is Neutral protease NprE (nprE), found in Bacillus pumilus (Bacillus mesentericus).